The chain runs to 770 residues: Probable zinc transporter protein DDB_G0291141 (770 aa).

The Cytoplasmic segment spans residues 1 to 36 (MAGSLDDSIYNNGRSGGGGGGFKFSKGFNKDSISKR). Residues 37-57 (IIMMLFFSKGIRAWSCIILLY) form a helical membrane-spanning segment. Over 58-62 (FLQSS) the chain is Extracellular. Residues 63-83 (ISIISASFYMCLFSAIFSVVV) traverse the membrane as a helical segment. The Cytoplasmic segment spans residues 84–100 (EKPWNLLSSLRPSQIKK). Residues 101-117 (IIYHSIFNLLIIITWNS) form a helical membrane-spanning segment. Residues 118–123 (SIKFIG) are Extracellular-facing. Residues 124–146 (PIGSILASDYTFSTYPLIFNSLL) form a helical membrane-spanning segment. At 147-154 (QGNFLATD) the chain is on the cytoplasmic side. Residues 155–175 (MSRGSIMLMIGYFLIPLFGIS) form a helical membrane-spanning segment. Residues 176 to 184 (NRLDILGYT) are Extracellular-facing. Residues 185–205 (SSQVFMIGLFSLIVHNVLVLW) form a helical membrane-spanning segment. The Cytoplasmic segment spans residues 206–224 (KKTIVRSWNSGSSGGKNKL). The chain crosses the membrane as a helical span at residues 225–245 (SSLGSCVSTIILFVFKLFEGF). At 246–262 (SSGSSGSDSINQVSYSQ) the chain is on the extracellular side. Residues 263–283 (LFVIAIITFILYSLNQFIDDV) form a helical membrane-spanning segment. The Cytoplasmic segment spans residues 284 to 291 (SEKELTFN). Residues 292–312 (VLSKVSLTSSVIFGLLAALFI) traverse the membrane as a helical segment. Topologically, residues 313–316 (GFKD) are extracellular. A helical membrane pass occupies residues 317 to 337 (FFHPILILSFIFIINAIHILY). The Cytoplasmic portion of the chain corresponds to 338 to 404 (SKSNDIQPMT…QIVDKPTSRR (67 aa)). Residues 405-425 (IFTFLVINLMFMFVEMAYGIW) traverse the membrane as a helical segment. At 426 to 434 (TNSLGLITD) the chain is on the extracellular side. The chain crosses the membrane as a helical span at residues 435 to 455 (ACHMFFDATALFIALVAEVIS). Residues 456–469 (QWKQNDKYSYGYGR) lie on the Cytoplasmic side of the membrane. The chain crosses the membrane as a helical span at residues 470-490 (FQVLSGFVNGIFLIFIAVTIL). The Extracellular segment spans residues 491–507 (MESVERLLEPPEINTDK). The helical transmembrane segment at 508 to 528 (LLLVSVLGFIINLIGIFSFHG) threads the bilayer. At 529 to 592 (DHGHSHGGGG…GVFLHLLADT (64 aa)) the chain is on the cytoplasmic side. A disordered region spans residues 532–566 (HSHGGGGGHSHGGGEKKEKHHGHSHGGHGDHQQVT). A helical membrane pass occupies residues 593 to 613 (LGSVGVIVSSLIIQIWGYTLA). A topological domain (extracellular) is located at residue D614. The chain crosses the membrane as a helical span at residues 615-635 (PICSLLISILIFLSVLPLIAN). The Cytoplasmic portion of the chain corresponds to 636–770 (TAKTLLQCTP…SSSSHHHRHN (135 aa)). A disordered region spans residues 751–770 (DIHHNHSSSSSSSSHHHRHN).

Belongs to the cation diffusion facilitator (CDF) transporter (TC 2.A.4) family. SLC30A subfamily.

Its subcellular location is the membrane. In terms of biological role, may be involved in zinc transport from the cytoplasm to either intracellular organelles or extracellular spaces. The polypeptide is Probable zinc transporter protein DDB_G0291141 (Dictyostelium discoideum (Social amoeba)).